Consider the following 391-residue polypeptide: Alkanesulfonate monooxygenase (391 aa).

This sequence belongs to the SsuD family.

It carries out the reaction an alkanesulfonate + FMNH2 + O2 = an aldehyde + FMN + sulfite + H2O + 2 H(+). In terms of biological role, catalyzes the desulfonation of aliphatic sulfonates. This Paracidovorax citrulli (strain AAC00-1) (Acidovorax citrulli) protein is Alkanesulfonate monooxygenase.